A 226-amino-acid polypeptide reads, in one-letter code: MTVQRLVAAAVLVALVSLILNNVAAFTSNWVCQTLEDGRRRSVGLWRSCWLVDRTRGGPSPGARAGQVDAHDCEALGWGSEAAGFQESRGTVKLQFDMMRACNLVATAALTAGQLTFLLGLVGLPLLSPDAPCWEEAMAAAFQLASFVLVIGLVTFYRIGPYTNLSWSCYLNIGACLLATLAAAMLIWNILHKREDCMAPRVIVISRSLTARFRRGLDNDYVESPC.

The Cytoplasmic segment spans residues 1-5 (MTVQR). The helical transmembrane segment at 6-26 (LVAAAVLVALVSLILNNVAAF) threads the bilayer. The Extracellular segment spans residues 27-103 (TSNWVCQTLE…LQFDMMRACN (77 aa)). Residues 104–124 (LVATAALTAGQLTFLLGLVGL) form a helical membrane-spanning segment. The Cytoplasmic portion of the chain corresponds to 125 to 136 (PLLSPDAPCWEE). A helical transmembrane segment spans residues 137–157 (AMAAAFQLASFVLVIGLVTFY). The Extracellular segment spans residues 158–170 (RIGPYTNLSWSCY). N-linked (GlcNAc...) asparagine glycosylation is present at N164. Residues 171–191 (LNIGACLLATLAAAMLIWNIL) form a helical membrane-spanning segment. At 192-226 (HKREDCMAPRVIVISRSLTARFRRGLDNDYVESPC) the chain is on the cytoplasmic side.

In terms of tissue distribution, highly expressed in lung, heart, kidney and placenta. Lower expression in thymus, spleen, liver, testis and ovary. Expressed in endothelial and restricted epithelial cell populations.

It is found in the cell junction. It localises to the adherens junction. Its subcellular location is the cell membrane. Its function is as follows. Can influence paracellular permeability. Appears to be involved in cell-cell interactions through adherens. The chain is Transmembrane protein 204 (TMEM204) from Homo sapiens (Human).